The sequence spans 77 residues: uncharacterized protein (77 aa).

It to E.coli YdfK.

This is an uncharacterized protein from Escherichia coli (strain K12).